The following is a 299-amino-acid chain: Hydrogenase maturation factor HypB (299 aa).

Residues Cys2, Cys5, and Cys7 each coordinate Ni(2+). Residues 18 to 57 (EVGDDGHGHHHHDGHHDHDHDHDHHRGDHEHDDHHHAEDG) form a disordered region. A compositionally biased stretch (basic and acidic residues) spans 31 to 57 (GHHDHDHDHDHHRGDHEHDDHHHAEDG). Positions 107–268 (ALNFVSSPGS…LRVNPRLQTL (162 aa)) are G-domain. Ni(2+)-binding residues include Cys167, His168, and Cys199. Zn(2+) is bound by residues Cys167, His168, and Cys199.

It belongs to the SIMIBI class G3E GTPase family. HypB/HupM subfamily.

Its function is as follows. Involved in the maturation of [NiFe] hydrogenases. Required for nickel insertion into the metal center of the hydrogenase. Exhibits a low intrinsic GTPase activity, which is essential for nickel insertion. Is able to bind 4 nickel ions per subunit. Can also bind zinc. This chain is Hydrogenase maturation factor HypB, found in Rhizobium leguminosarum bv. viciae.